Consider the following 409-residue polypeptide: Peptidase T (409 aa).

Residue histidine 79 participates in Zn(2+) binding. Residue aspartate 81 is part of the active site. Residue aspartate 140 participates in Zn(2+) binding. Residue glutamate 174 is the Proton acceptor of the active site. The Zn(2+) site is built by glutamate 175, aspartate 197, and histidine 379.

It belongs to the peptidase M20B family. The cofactor is Zn(2+).

Its subcellular location is the cytoplasm. It carries out the reaction Release of the N-terminal residue from a tripeptide.. In terms of biological role, cleaves the N-terminal amino acid of tripeptides. This Lysinibacillus sphaericus (strain C3-41) protein is Peptidase T.